Consider the following 154-residue polypeptide: 17.6 kDa class I heat shock protein (154 aa).

The sHSP domain maps to 40–154 (ETSAFANTRI…PDVKSIEISG (115 aa)).

This sequence belongs to the small heat shock protein (HSP20) family. In terms of assembly, forms oligomeric structures.

It localises to the cytoplasm. The sequence is that of 17.6 kDa class I heat shock protein from Solanum peruvianum (Peruvian tomato).